We begin with the raw amino-acid sequence, 885 residues long: MASQYPGHQLDDIPSTNVYRPPPRHEDDEAEHALLHQNSAYQSQYDDPHSRPLTPGQESVYTLNESYVGGDPSKVPVTSYNPQYTQPYGQGYGMNNSRPGFPTPGPPDPIDRTDSTEAWRERQAPGFGTIKRYATRKVKLVQGSVLSIDYPVPSAIQNAIQAKYRNDLEGGSEEFTHMRYTAATCDPDDFTLKNGYNLRPAMYNRHTELLIAITYYNEDKVLTARTLHGVMQNIRDIVNLKKSEFWNKGGPAWQKIVVCLVFDGIDPCDKNTLDVLATIGVYQDGVMKKDVDGKETVAHIFEYTTQLSVTANQQLIRPNDNDATSLPPAQMIFCLKQKNRKKINSHRWLFNAFGRILNPEVCILLDAGTKPGSKSLMALWQAFYNDKDLGGACGEIHAMLGPGGVFGRKLLNPLVAAQNFEYKISNILDKPLESSFGYVSVLPGAFSAYRFRAIMGRPLEQYFHGDHTLSKTLGKKGIEGMNIFKKNMFLAEDRILCFELVAKAGSKWHLSYVKASKAETDVPEGPPEFIGQRRRWLNGSFAASMYCLMHFSRMYKSGHNLIRMFFLHIQMIYNIVSVLLSWFSLASFWLTTKVLMDLVGQPSTSNDNAAFPFGNTATPIINTILQYLYLAFLLLQFILALGNRPKGSKVAYIISFCLFGLIQLYVIVLSMYLVVRAFTTKNGTDIVTNEGANEFVKSFFASTGPGIVIIALAATFGLYFVASFLYMDPWHMFTSFAQYLLLMPSFINILMIYAFSNWHDVSWGTKGSDKADVLPSAQTKKDEKSKTAVVEEVDKPQADIDSQFEATVRRALAPYKPPEEKEEKTLEDSYKNFRTRLVATWIFSNALLAVAITSDSLDRFGFTSEPLRGPAISSRRFCGLLRPCL.

The tract at residues Met-1–Ser-59 is disordered. Residues Pro-23–Leu-34 are compositionally biased toward basic and acidic residues. Residues His-36 to Tyr-45 are compositionally biased toward polar residues. Transmembrane regions (helical) follow at residues Phe-565–Leu-585, Ile-620–Ala-640, Val-650–Ser-670, Ile-707–Met-727, Ser-735–Phe-755, and Leu-837–Leu-857.

Belongs to the chitin synthase family. Class III subfamily.

It localises to the cell membrane. The enzyme catalyses [(1-&gt;4)-N-acetyl-beta-D-glucosaminyl](n) + UDP-N-acetyl-alpha-D-glucosamine = [(1-&gt;4)-N-acetyl-beta-D-glucosaminyl](n+1) + UDP + H(+). Functionally, polymerizes chitin, a structural polymer of the cell wall and septum, by transferring the sugar moiety of UDP-GlcNAc to the non-reducing end of the growing chitin polymer. Is not only stable at different pH, but is also able to tolerate a broad temperature range. With CHS2, plays an important role in virulence. This is Chitin synthase 3 from Exophiala dermatitidis (Black yeast-like fungus).